We begin with the raw amino-acid sequence, 105 residues long: Nucleoid-associated protein Lm4b_02677 (105 aa).

Low complexity predominate over residues 1-16; the sequence is MRGMGNMQGMMKQMQK. The segment at 1-23 is disordered; the sequence is MRGMGNMQGMMKQMQKMQKEMAK.

It belongs to the YbaB/EbfC family. As to quaternary structure, homodimer.

It is found in the cytoplasm. It localises to the nucleoid. Binds to DNA and alters its conformation. May be involved in regulation of gene expression, nucleoid organization and DNA protection. The protein is Nucleoid-associated protein Lm4b_02677 of Listeria monocytogenes serotype 4b (strain CLIP80459).